The chain runs to 222 residues: Uracil-DNA glycosylase (222 aa).

The active-site Proton acceptor is D61.

Belongs to the uracil-DNA glycosylase (UDG) superfamily. UNG family.

It is found in the cytoplasm. The catalysed reaction is Hydrolyzes single-stranded DNA or mismatched double-stranded DNA and polynucleotides, releasing free uracil.. In terms of biological role, excises uracil residues from the DNA which can arise as a result of misincorporation of dUMP residues by DNA polymerase or due to deamination of cytosine. This chain is Uracil-DNA glycosylase, found in Aeromonas salmonicida (strain A449).